The primary structure comprises 323 residues: Lipoyl synthase (323 aa).

[4Fe-4S] cluster-binding residues include Cys61, Cys66, Cys72, Cys87, Cys91, Cys94, and Ser303. Residues 73-292 (WTKKTATFLV…EQYGLSIGIP (220 aa)) enclose the Radical SAM core domain.

Belongs to the radical SAM superfamily. Lipoyl synthase family. Requires [4Fe-4S] cluster as cofactor.

The protein resides in the cytoplasm. It catalyses the reaction [[Fe-S] cluster scaffold protein carrying a second [4Fe-4S](2+) cluster] + N(6)-octanoyl-L-lysyl-[protein] + 2 oxidized [2Fe-2S]-[ferredoxin] + 2 S-adenosyl-L-methionine + 4 H(+) = [[Fe-S] cluster scaffold protein] + N(6)-[(R)-dihydrolipoyl]-L-lysyl-[protein] + 4 Fe(3+) + 2 hydrogen sulfide + 2 5'-deoxyadenosine + 2 L-methionine + 2 reduced [2Fe-2S]-[ferredoxin]. It functions in the pathway protein modification; protein lipoylation via endogenous pathway; protein N(6)-(lipoyl)lysine from octanoyl-[acyl-carrier-protein]: step 2/2. Its function is as follows. Catalyzes the radical-mediated insertion of two sulfur atoms into the C-6 and C-8 positions of the octanoyl moiety bound to the lipoyl domains of lipoate-dependent enzymes, thereby converting the octanoylated domains into lipoylated derivatives. This Protochlamydia amoebophila (strain UWE25) protein is Lipoyl synthase.